An 85-amino-acid chain; its full sequence is Small ribosomal subunit protein bS20 (85 aa).

It belongs to the bacterial ribosomal protein bS20 family.

In terms of biological role, binds directly to 16S ribosomal RNA. This Lactobacillus johnsonii (strain CNCM I-12250 / La1 / NCC 533) protein is Small ribosomal subunit protein bS20.